A 164-amino-acid chain; its full sequence is Peptide deformylase (164 aa).

Fe cation contacts are provided by cysteine 87 and histidine 129. Glutamate 130 is an active-site residue. Histidine 133 is a Fe cation binding site.

Belongs to the polypeptide deformylase family. Fe(2+) serves as cofactor.

It catalyses the reaction N-terminal N-formyl-L-methionyl-[peptide] + H2O = N-terminal L-methionyl-[peptide] + formate. Functionally, removes the formyl group from the N-terminal Met of newly synthesized proteins. Requires at least a dipeptide for an efficient rate of reaction. N-terminal L-methionine is a prerequisite for activity but the enzyme has broad specificity at other positions. This Thermotoga neapolitana (strain ATCC 49049 / DSM 4359 / NBRC 107923 / NS-E) protein is Peptide deformylase.